The chain runs to 256 residues: Peroxisomal membrane protein PMP30B (256 aa).

This sequence belongs to the peroxin-11 family.

It is found in the peroxisome membrane. Functionally, involved in peroxisomal proliferation. Could participate in peroxisomal elongation or fission. May be involved in parceling of peroxisomes into regular quanta. This chain is Peroxisomal membrane protein PMP30B (PEX11B), found in Candida boidinii (Yeast).